The following is a 227-amino-acid chain: Cytochrome c oxidase subunit 2 (227 aa).

The Mitochondrial intermembrane segment spans residues 1–14 (MAYPFQLGLQDATS). Residues 15–45 (PIMEELLHFHDHTLMIVFLISSLVLYIISLM) form a helical membrane-spanning segment. At 46 to 59 (LTTKLTHTSTMDAQ) the chain is on the mitochondrial matrix side. Residues 60–87 (EVETVWTILPAIILVLIALPSLRILYMM) traverse the membrane as a helical segment. Residues 88-227 (DEINNPSLTV…YFETWSALMV (140 aa)) lie on the Mitochondrial intermembrane side of the membrane. 6 residues coordinate Cu cation: His-161, Cys-196, Glu-198, Cys-200, His-204, and Met-207. Glu-198 is a Mg(2+) binding site. Position 218 is a phosphotyrosine (Tyr-218).

It belongs to the cytochrome c oxidase subunit 2 family. In terms of assembly, component of the cytochrome c oxidase (complex IV, CIV), a multisubunit enzyme composed of 14 subunits. The complex is composed of a catalytic core of 3 subunits MT-CO1, MT-CO2 and MT-CO3, encoded in the mitochondrial DNA, and 11 supernumerary subunits COX4I, COX5A, COX5B, COX6A, COX6B, COX6C, COX7A, COX7B, COX7C, COX8 and NDUFA4, which are encoded in the nuclear genome. The complex exists as a monomer or a dimer and forms supercomplexes (SCs) in the inner mitochondrial membrane with NADH-ubiquinone oxidoreductase (complex I, CI) and ubiquinol-cytochrome c oxidoreductase (cytochrome b-c1 complex, complex III, CIII), resulting in different assemblies (supercomplex SCI(1)III(2)IV(1) and megacomplex MCI(2)III(2)IV(2)). Found in a complex with TMEM177, COA6, COX18, COX20, SCO1 and SCO2. Interacts with TMEM177 in a COX20-dependent manner. Interacts with COX20. Interacts with COX16. Cu cation serves as cofactor.

Its subcellular location is the mitochondrion inner membrane. The catalysed reaction is 4 Fe(II)-[cytochrome c] + O2 + 8 H(+)(in) = 4 Fe(III)-[cytochrome c] + 2 H2O + 4 H(+)(out). In terms of biological role, component of the cytochrome c oxidase, the last enzyme in the mitochondrial electron transport chain which drives oxidative phosphorylation. The respiratory chain contains 3 multisubunit complexes succinate dehydrogenase (complex II, CII), ubiquinol-cytochrome c oxidoreductase (cytochrome b-c1 complex, complex III, CIII) and cytochrome c oxidase (complex IV, CIV), that cooperate to transfer electrons derived from NADH and succinate to molecular oxygen, creating an electrochemical gradient over the inner membrane that drives transmembrane transport and the ATP synthase. Cytochrome c oxidase is the component of the respiratory chain that catalyzes the reduction of oxygen to water. Electrons originating from reduced cytochrome c in the intermembrane space (IMS) are transferred via the dinuclear copper A center (CU(A)) of subunit 2 and heme A of subunit 1 to the active site in subunit 1, a binuclear center (BNC) formed by heme A3 and copper B (CU(B)). The BNC reduces molecular oxygen to 2 water molecules using 4 electrons from cytochrome c in the IMS and 4 protons from the mitochondrial matrix. This Cerdocyon thous (Crab-eating fox) protein is Cytochrome c oxidase subunit 2 (MT-CO2).